The chain runs to 259 residues: 4-hydroxy-tetrahydrodipicolinate reductase (259 aa).

NAD(+)-binding positions include 8 to 13 (GFKGRM), 93 to 95 (GTT), and 119 to 122 (APNF). H149 acts as the Proton donor/acceptor in catalysis. H150 is a binding site for (S)-2,3,4,5-tetrahydrodipicolinate. Catalysis depends on K153, which acts as the Proton donor. 159 to 160 (GT) is a binding site for (S)-2,3,4,5-tetrahydrodipicolinate.

The protein belongs to the DapB family.

Its subcellular location is the cytoplasm. The enzyme catalyses (S)-2,3,4,5-tetrahydrodipicolinate + NAD(+) + H2O = (2S,4S)-4-hydroxy-2,3,4,5-tetrahydrodipicolinate + NADH + H(+). The catalysed reaction is (S)-2,3,4,5-tetrahydrodipicolinate + NADP(+) + H2O = (2S,4S)-4-hydroxy-2,3,4,5-tetrahydrodipicolinate + NADPH + H(+). The protein operates within amino-acid biosynthesis; L-lysine biosynthesis via DAP pathway; (S)-tetrahydrodipicolinate from L-aspartate: step 4/4. Functionally, catalyzes the conversion of 4-hydroxy-tetrahydrodipicolinate (HTPA) to tetrahydrodipicolinate. The polypeptide is 4-hydroxy-tetrahydrodipicolinate reductase (Enterococcus faecalis (strain ATCC 700802 / V583)).